A 151-amino-acid polypeptide reads, in one-letter code: Globin (151 aa).

The Globin domain maps to 2–151; that stretch reads SLSDADKKAL…AAFNETLKKA (150 aa). His-100 contacts heme b.

It belongs to the globin family.

This Biomphalaria glabrata (Bloodfluke planorb) protein is Globin.